The following is a 473-amino-acid chain: Ammonium transporter Rh type C (473 aa).

Residues 1-9 lie on the Cytoplasmic side of the membrane; it reads MLRNSNMRW. Residues 10-30 form a helical membrane-spanning segment; it reads RLPLICFVWEIAMIVLFGIFV. Residues 31-61 lie on the Extracellular side of the membrane; the sequence is RYNDEADPHWPIFMKHENITSDIENDFYFRY. N-linked (GlcNAc...) asparagine glycosylation occurs at Asn48. A helical membrane pass occupies residues 62 to 82; sequence PSFQDVHVMIFVGFGFLMTFL. Over 83–86 the chain is Cytoplasmic; it reads QRYG. Residues 87-107 traverse the membrane as a helical segment; sequence FGSVAFNFLLAAFGIQWALLM. The Extracellular segment spans residues 108 to 125; the sequence is QGWFHTFVNGKILIGVES. The chain crosses the membrane as a helical span at residues 126-145; the sequence is LINADFCVGSVCIAFGGVLG. The Cytoplasmic portion of the chain corresponds to 146 to 151; the sequence is KVSPVQ. A helical membrane pass occupies residues 152–171; it reads IMLMTLFQVTLFAVNEWILL. Residues 172 to 179 are Extracellular-facing; the sequence is NKLHVIDA. Residues 180–200 form a helical membrane-spanning segment; it reads GGSMTIHTFGAYFGLTVAWIL. Residues 201–219 lie on the Cytoplasmic side of the membrane; it reads SRPKLKQNNDKEGSTYISD. Residues 220 to 240 form a helical membrane-spanning segment; it reads LFSMIGTLFLWMYWPSFNSAI. Residues 241 to 251 are Extracellular-facing; it reads SYHGDAQHRAA. Residues 252-272 traverse the membrane as a helical segment; it reads INTYCSLAACVLTTVAISSVV. Topologically, residues 273–285 are cytoplasmic; the sequence is NKKGKLEMVHIQN. Residues 286–306 traverse the membrane as a helical segment; that stretch reads ATLAGGVAVGTAAEMMLTPYG. Position 307 (Ser307) is a topological domain, extracellular. A helical transmembrane segment spans residues 308–328; sequence LIVGFICGIVSTLGFTYLSPI. At 329 to 343 the chain is on the cytoplasmic side; it reads LSNKLRLHDTCGIHN. The chain crosses the membrane as a helical span at residues 344–364; sequence LHAIPGLIGGIVGAVTAACAT. At 365 to 396 the chain is on the extracellular side; that stretch reads EGVYTAEGLKKMFHFEGEYADRTPSIQGIYQA. The helical transmembrane segment at 397–417 threads the bilayer; sequence AGIGVSLAFGIVGGTVVGCIL. Residues 418 to 473 lie on the Cytoplasmic side of the membrane; that stretch reads KLPIWGDPSDENCFDDDVYWELREEDEEEHLGAANQYITHLPENFKLPDRTEISFK.

Belongs to the ammonium transporter (TC 2.A.49) family. Rh subfamily. Homotrimer.

It localises to the apical cell membrane. In terms of biological role, functions as an ammonia transporter. This Xenopus laevis (African clawed frog) protein is Ammonium transporter Rh type C (rhcg).